The primary structure comprises 644 residues: MVAITLPDGSVKNFEGNTTVMEVAQSIGTGLAKATVAGRVDGHLVDAHDPIVADAKVEIVTPRDDDGVDIIRHSCAHLLGHAVKQLYPDVKMVIGPVIDDGFYYDIYSETPFTPEHMAAIEKRMMELIKQDYDVIKKITPRAEVIKIFEERGEDYKLKLINDMPGEEAFGLYHHQEYVDMCRGPHVPNTRFLKVFKLTKMSGAYWRGDAKNEQLQRIYGTAWADKKDLKTYIQRIEEAEKRDHRKIGKALNLFHMQEQAPGMVFWHANGWTIYQVLEQYMRKVQQDNGYEEIKTPQIVDRSLWERSGHWGNYATNMFTTSSEKRDYAVKPMNCPCHVQVFNQGLKSYRDLPLRMAEFGSCHRNEPSGSLHGLMRVRGFTQDDAHIFCTQSQIQQEVADFIKLTLAVYEDFGFNNIIMKLSTRPEKRVGSDESWDFAEKALADALDNSGLDWAYLPGEGAFYGPKIEFSLKDSLGRVWQCGTIQVDPNMPERLDAEFVNEQNEREVPIMLHRAILGSFERFIGILIENYAGWMPVWLAPQQVVVMNITDKQAEACENVVNELKKSGLRAISDLRNEKIGFKIREKTLERIPYMLVLGDKEVESGSVNVRTREGENLGVMSVAEFIILVETAVAEKGRQTPKIDQE.

A TGS domain is found at 1–61 (MVAITLPDGS…VADAKVEIVT (61 aa)). Residues 242–533 (DHRKIGKALN…LIENYAGWMP (292 aa)) are catalytic. Cysteine 333, histidine 384, and histidine 510 together coordinate Zn(2+).

It belongs to the class-II aminoacyl-tRNA synthetase family. As to quaternary structure, homodimer. It depends on Zn(2+) as a cofactor.

It localises to the cytoplasm. The enzyme catalyses tRNA(Thr) + L-threonine + ATP = L-threonyl-tRNA(Thr) + AMP + diphosphate + H(+). Functionally, catalyzes the attachment of threonine to tRNA(Thr) in a two-step reaction: L-threonine is first activated by ATP to form Thr-AMP and then transferred to the acceptor end of tRNA(Thr). Also edits incorrectly charged L-seryl-tRNA(Thr). In Psychrobacter arcticus (strain DSM 17307 / VKM B-2377 / 273-4), this protein is Threonine--tRNA ligase.